The chain runs to 294 residues: Glutamyl-Q tRNA(Asp) synthetase (294 aa).

Residues 8-12 and E44 each bind L-glutamate; that span reads RFAPT. The short motif at 11–21 is the 'HIGH' region element; the sequence is PTPSGYLHFGS. 4 residues coordinate Zn(2+): C100, C102, Y114, and C118. L-glutamate contacts are provided by Y171 and R189. A 'KMSKS' region motif is present at residues 227–231; the sequence is KLGKS. Position 230 (K230) interacts with ATP.

The protein belongs to the class-I aminoacyl-tRNA synthetase family. GluQ subfamily. The cofactor is Zn(2+).

In terms of biological role, catalyzes the tRNA-independent activation of glutamate in presence of ATP and the subsequent transfer of glutamate onto a tRNA(Asp). Glutamate is transferred on the 2-amino-5-(4,5-dihydroxy-2-cyclopenten-1-yl) moiety of the queuosine in the wobble position of the QUC anticodon. The sequence is that of Glutamyl-Q tRNA(Asp) synthetase from Ectopseudomonas mendocina (strain ymp) (Pseudomonas mendocina).